Consider the following 305-residue polypeptide: Acetylglutamate kinase (305 aa).

Substrate is bound by residues 67 to 68, arginine 89, and asparagine 190; that span reads GG.

The protein belongs to the acetylglutamate kinase family. ArgB subfamily.

It is found in the cytoplasm. The catalysed reaction is N-acetyl-L-glutamate + ATP = N-acetyl-L-glutamyl 5-phosphate + ADP. It functions in the pathway amino-acid biosynthesis; L-arginine biosynthesis; N(2)-acetyl-L-ornithine from L-glutamate: step 2/4. In terms of biological role, catalyzes the ATP-dependent phosphorylation of N-acetyl-L-glutamate. This is Acetylglutamate kinase from Bifidobacterium longum subsp. infantis (strain ATCC 15697 / DSM 20088 / JCM 1222 / NCTC 11817 / S12).